Here is a 292-residue protein sequence, read N- to C-terminus: High-affinity heme uptake system protein IsdE (292 aa).

A signal peptide spans 1 to 19; the sequence is MRIIKYLTILVISVVILTS. A lipid anchor (N-palmitoyl cysteine) is attached at Cys-20. Cys-20 carries the S-diacylglycerol cysteine lipid modification. Residues 35-291 form the Fe/B12 periplasmic-binding domain; that stretch reads RIVPTTVALT…QLYDLFYKDK (257 aa). Heme is bound by residues Val-41, Ala-42, Ser-60, Tyr-61, Met-78, and His-229.

Belongs to the bacterial solute-binding protein 8 family. The cofactor is heme b.

It is found in the cell membrane. Functionally, involved in heme (porphyrin) scavenging. Binds Fe(2+) and Fe(3+) heme but the largest fraction is Fe(2+) heme. Functions as a high-affinity heme binding protein and probably has a role in relaying heme-iron from cell wall-anchored isd proteins receptors to the probable permease IsdF. This is High-affinity heme uptake system protein IsdE (isdE) from Staphylococcus aureus (strain MRSA252).